A 156-amino-acid chain; its full sequence is Small ribosomal subunit protein uS7 (156 aa).

It belongs to the universal ribosomal protein uS7 family. In terms of assembly, part of the 30S ribosomal subunit. Contacts proteins S9 and S11.

Functionally, one of the primary rRNA binding proteins, it binds directly to 16S rRNA where it nucleates assembly of the head domain of the 30S subunit. Is located at the subunit interface close to the decoding center, probably blocks exit of the E-site tRNA. The chain is Small ribosomal subunit protein uS7 from Methylocella silvestris (strain DSM 15510 / CIP 108128 / LMG 27833 / NCIMB 13906 / BL2).